The primary structure comprises 365 residues: 3-dehydroquinate synthase (365 aa).

NAD(+) is bound by residues 75–80 (DAESGK), 109–113 (GAATD), 133–134 (TT), K146, and K155. Residues E188, H253, and H269 each coordinate Zn(2+).

This sequence belongs to the sugar phosphate cyclases superfamily. Dehydroquinate synthase family. Requires NAD(+) as cofactor. Co(2+) is required as a cofactor. It depends on Zn(2+) as a cofactor.

The protein resides in the cytoplasm. It carries out the reaction 7-phospho-2-dehydro-3-deoxy-D-arabino-heptonate = 3-dehydroquinate + phosphate. The protein operates within metabolic intermediate biosynthesis; chorismate biosynthesis; chorismate from D-erythrose 4-phosphate and phosphoenolpyruvate: step 2/7. In terms of biological role, catalyzes the conversion of 3-deoxy-D-arabino-heptulosonate 7-phosphate (DAHP) to dehydroquinate (DHQ). The chain is 3-dehydroquinate synthase from Corynebacterium efficiens (strain DSM 44549 / YS-314 / AJ 12310 / JCM 11189 / NBRC 100395).